Here is a 278-residue protein sequence, read N- to C-terminus: Tryptophan synthase alpha chain (278 aa).

Active-site proton acceptor residues include glutamate 50 and aspartate 61.

This sequence belongs to the TrpA family. As to quaternary structure, tetramer of two alpha and two beta chains.

It carries out the reaction (1S,2R)-1-C-(indol-3-yl)glycerol 3-phosphate + L-serine = D-glyceraldehyde 3-phosphate + L-tryptophan + H2O. The protein operates within amino-acid biosynthesis; L-tryptophan biosynthesis; L-tryptophan from chorismate: step 5/5. The alpha subunit is responsible for the aldol cleavage of indoleglycerol phosphate to indole and glyceraldehyde 3-phosphate. The sequence is that of Tryptophan synthase alpha chain from Rhodopseudomonas palustris (strain BisB5).